Reading from the N-terminus, the 96-residue chain is Protein RnfH (96 aa).

Belongs to the UPF0125 (RnfH) family.

The sequence is that of Protein RnfH from Psychromonas ingrahamii (strain DSM 17664 / CCUG 51855 / 37).